A 93-amino-acid chain; its full sequence is Small ribosomal subunit protein bS18 (93 aa).

It belongs to the bacterial ribosomal protein bS18 family. In terms of assembly, part of the 30S ribosomal subunit. Forms a tight heterodimer with protein bS6.

Functionally, binds as a heterodimer with protein bS6 to the central domain of the 16S rRNA, where it helps stabilize the platform of the 30S subunit. In Delftia acidovorans (strain DSM 14801 / SPH-1), this protein is Small ribosomal subunit protein bS18.